Reading from the N-terminus, the 151-residue chain is Deoxyuridine 5'-triphosphate nucleotidohydrolase (151 aa).

Residues 70–72 (RSG), asparagine 83, 87–89 (LID), and methionine 97 contribute to the substrate site.

Belongs to the dUTPase family. Mg(2+) is required as a cofactor.

It carries out the reaction dUTP + H2O = dUMP + diphosphate + H(+). Its pathway is pyrimidine metabolism; dUMP biosynthesis; dUMP from dCTP (dUTP route): step 2/2. This enzyme is involved in nucleotide metabolism: it produces dUMP, the immediate precursor of thymidine nucleotides and it decreases the intracellular concentration of dUTP so that uracil cannot be incorporated into DNA. The sequence is that of Deoxyuridine 5'-triphosphate nucleotidohydrolase from Pseudomonas aeruginosa (strain UCBPP-PA14).